Consider the following 190-residue polypeptide: Dynactin subunit 6 (190 aa).

Threonine 186 carries the phosphothreonine modification.

It belongs to the dynactin subunits 5/6 family. Dynactin subunit 6 subfamily. As to quaternary structure, subunit of dynactin, a multiprotein complex part of a tripartite complex with dynein and a adapter, such as BICDL1, BICD2 or HOOK3. The dynactin complex is built around ACTR1A/ACTB filament and consists of an actin-related filament composed of a shoulder domain, a pointed end and a barbed end. Its length is defined by its flexible shoulder domain. The soulder is composed of 2 DCTN1 subunits, 4 DCTN2 and 2 DCTN3. The 4 DCNT2 (via N-terminus) bind the ACTR1A filament and act as molecular rulers to determine the length. The pointed end is important for binding dynein-dynactin cargo adapters. Consists of 4 subunits: ACTR10, DCNT4, DCTN5 and DCTN6. Within the complex DCTN6 forms a heterodimer with DCTN5. The barbed end is composed of a CAPZA1:CAPZB heterodimers, which binds ACTR1A/ACTB filament and dynactin and stabilizes dynactin. Interacts with PLK1. Interacts with N4BP2L1. In terms of processing, phosphorylation at Thr-186 by CDK1 during mitotic prometaphase creates a binding site for PLK1 that facilitates its recruitment to kinetochores.

The protein resides in the cytoplasm. Its subcellular location is the cytoskeleton. It localises to the chromosome. The protein localises to the centromere. It is found in the kinetochore. Part of the dynactin complex that activates the molecular motor dynein for ultra-processive transport along microtubules. The sequence is that of Dynactin subunit 6 (DCTN6) from Sus scrofa (Pig).